We begin with the raw amino-acid sequence, 491 residues long: Probable cytosol aminopeptidase (491 aa).

Positions 260 and 265 each coordinate Mn(2+). Residue lysine 272 is part of the active site. Residues aspartate 284, aspartate 343, and glutamate 345 each coordinate Mn(2+). Arginine 347 is an active-site residue.

The protein belongs to the peptidase M17 family. Requires Mn(2+) as cofactor.

It localises to the cytoplasm. It carries out the reaction Release of an N-terminal amino acid, Xaa-|-Yaa-, in which Xaa is preferably Leu, but may be other amino acids including Pro although not Arg or Lys, and Yaa may be Pro. Amino acid amides and methyl esters are also readily hydrolyzed, but rates on arylamides are exceedingly low.. The enzyme catalyses Release of an N-terminal amino acid, preferentially leucine, but not glutamic or aspartic acids.. In terms of biological role, presumably involved in the processing and regular turnover of intracellular proteins. Catalyzes the removal of unsubstituted N-terminal amino acids from various peptides. The sequence is that of Probable cytosol aminopeptidase from Trichormus variabilis (strain ATCC 29413 / PCC 7937) (Anabaena variabilis).